The sequence spans 250 residues: Type-1Ab cytolytic delta-endotoxin (250 aa).

Belongs to the cyt1/cyt2 endotoxin family. Post-translationally, active after proteolytic processing.

In terms of biological role, kills the larvae of dipteran insects by making pores in the epithelial cell membrane of the insect midgut. This chain is Type-1Ab cytolytic delta-endotoxin (cyt1Ab1), found in Bacillus thuringiensis subsp. medellin.